The chain runs to 163 residues: Phosphopantetheine adenylyltransferase (163 aa).

Position 9 (threonine 9) interacts with substrate. Residues 9-10 (TF) and histidine 17 contribute to the ATP site. 3 residues coordinate substrate: lysine 41, threonine 73, and arginine 87. Residues 88–90 (GLR), glutamate 98, and 123–129 (FSFISSS) each bind ATP.

This sequence belongs to the bacterial CoaD family. Homohexamer. The cofactor is Mg(2+).

It is found in the cytoplasm. It catalyses the reaction (R)-4'-phosphopantetheine + ATP + H(+) = 3'-dephospho-CoA + diphosphate. The protein operates within cofactor biosynthesis; coenzyme A biosynthesis; CoA from (R)-pantothenate: step 4/5. Reversibly transfers an adenylyl group from ATP to 4'-phosphopantetheine, yielding dephospho-CoA (dPCoA) and pyrophosphate. This chain is Phosphopantetheine adenylyltransferase, found in Desulfitobacterium hafniense (strain Y51).